The sequence spans 269 residues: Ubiquinone/menaquinone biosynthesis C-methyltransferase UbiE (269 aa).

Residues threonine 92, aspartate 113, and 141–142 (NA) contribute to the S-adenosyl-L-methionine site.

This sequence belongs to the class I-like SAM-binding methyltransferase superfamily. MenG/UbiE family.

The enzyme catalyses a 2-demethylmenaquinol + S-adenosyl-L-methionine = a menaquinol + S-adenosyl-L-homocysteine + H(+). The catalysed reaction is a 2-methoxy-6-(all-trans-polyprenyl)benzene-1,4-diol + S-adenosyl-L-methionine = a 5-methoxy-2-methyl-3-(all-trans-polyprenyl)benzene-1,4-diol + S-adenosyl-L-homocysteine + H(+). It functions in the pathway quinol/quinone metabolism; menaquinone biosynthesis; menaquinol from 1,4-dihydroxy-2-naphthoate: step 2/2. It participates in cofactor biosynthesis; ubiquinone biosynthesis. In terms of biological role, methyltransferase required for the conversion of demethylmenaquinol (DMKH2) to menaquinol (MKH2) and the conversion of 2-polyprenyl-6-methoxy-1,4-benzoquinol (DDMQH2) to 2-polyprenyl-3-methyl-6-methoxy-1,4-benzoquinol (DMQH2). The chain is Ubiquinone/menaquinone biosynthesis C-methyltransferase UbiE from Brucella suis biovar 1 (strain 1330).